The following is a 630-amino-acid chain: Cytochrome B pre-mRNA-processing protein 2 (630 aa).

It is found in the mitochondrion. In terms of biological role, appears to be specifically required for the splicing of the terminal intron (bI5) of the cytochrome b pre-mRNA. Can also stimulates the splicing of the omega intron of the precursor of large ribosomal RNA. In Saccharomyces cerevisiae (strain ATCC 204508 / S288c) (Baker's yeast), this protein is Cytochrome B pre-mRNA-processing protein 2 (CBP2).